We begin with the raw amino-acid sequence, 189 residues long: MTKLLVGLGNPGDKYFETKHNVGFMLIDQLAKKQNVTFTHDKIFQADLASFFLNGEKIYLVKPTTFMNESGKAVHALLTYYGLDIDDLLIIYDDLDMEVGKIRLRAKGSAGGHNGIKSIIQHIGTHVFNRVKIGIGRPKNGMSVVHHVLSKFDRDDYIGILQSVDKVDDSVNYYLQEKNFEKTMQRYNG.

Tyr-15 is a tRNA binding site. The active-site Proton acceptor is the His-20. TRNA contacts are provided by Phe-66, Asn-68, and Asn-114.

Belongs to the PTH family. In terms of assembly, monomer.

The protein localises to the cytoplasm. The catalysed reaction is an N-acyl-L-alpha-aminoacyl-tRNA + H2O = an N-acyl-L-amino acid + a tRNA + H(+). Functionally, hydrolyzes ribosome-free peptidyl-tRNAs (with 1 or more amino acids incorporated), which drop off the ribosome during protein synthesis, or as a result of ribosome stalling. In terms of biological role, catalyzes the release of premature peptidyl moieties from peptidyl-tRNA molecules trapped in stalled 50S ribosomal subunits, and thus maintains levels of free tRNAs and 50S ribosomes. This chain is Peptidyl-tRNA hydrolase, found in Streptococcus pneumoniae (strain CGSP14).